Here is a 181-residue protein sequence, read N- to C-terminus: ADP-ribosylation factor 1-like 2 (181 aa).

Gly2 is lipidated: N-myristoyl glycine. The segment at 3–16 (NVFGSLFKGLFGKR) is important for the stable binding to the membranes. GTP is bound by residues 24-32 (GLDAAGKTT), 126-129 (NKQD), and Ala160.

This sequence belongs to the small GTPase superfamily. Arf family. Expressed in hypodermis, intestine, spermatheca, uterus, gonadal sheath, vulva cells, pharynx muscle, body wall muscle, head neurons, ventral nerve cord.

Its subcellular location is the golgi apparatus membrane. It carries out the reaction GTP + H2O = GDP + phosphate + H(+). Its activity is regulated as follows. Alternates between an inactive GDP-bound form and an active GTP-bound form. Activated by a guanine nucleotide-exchange factor (GEF) and inactivated by GTPase-activating protein (GAP). Functionally, small GTPase involved in protein trafficking between different compartments. Modulates vesicle budding and uncoating within the Golgi complex. In its GTP-bound form, triggers the recruitment of coatomer proteins to the Golgi membrane. The hydrolysis of ARF1-bound GTP, which is mediated by ARFGAPs proteins, is required for dissociation of coat proteins from Golgi membranes and vesicles. Involved in endoplasmic reticulum dynamics during embryogenesis. Also required for adult germline function. Plays a role in cell shedding during embryogenesis probably by promoting the endocytosis of cell adhesion molecules. During neurogenesis, involved in cell autonomous Q.p neuroblast asymmetric divisions that generate one precursor cell and one apoptotic cell, probably by controlling endocytosis. Plays a role in maintaining mitochondrial morphology. This chain is ADP-ribosylation factor 1-like 2, found in Caenorhabditis elegans.